The chain runs to 435 residues: MTYFKQIEKINYEGVQSGNRFAFRHYNPEEVVLGKSMKEHLRFAVAYWHTMTQDGSDPFGAATNVRDVSGKTEMELARNRVEMFFEILEKLGVEYFCFHDVDIAPEGNSLQEFMRNLDEITDLIQDKMKQTGIKLLWNTANLFTHPRFLNGAASTNNADVYAFSAAQIKKGLDISKKLGGKNYVFWGGREGYESLLNTDMEFEQANMARMYKMAIRYANEIEHEVQFLIEPKPKEPTKHQYDFDAATTMAFLQKYGLENDFKLNLEANHATLAGHTFEHELNVARTYNALGSIDANQGDLLLGWDTDEFPTNIYDTTLTMYEILQNGGIAPGGINFDAKVRRTSFEMEDLLLAHIAGMDTYARGLKAAAKLTEDHFFDKIKEERYRSFKKGIGARILDNQEDFKSLTEYALAHDSIQNESSHIEYVKSRLNDYLV.

Active-site residues include histidine 99 and aspartate 102. Positions 230, 266, 269, 294, 305, 307, and 337 each coordinate Mg(2+).

This sequence belongs to the xylose isomerase family. In terms of assembly, homotetramer. The cofactor is Mg(2+).

The protein localises to the cytoplasm. It catalyses the reaction alpha-D-xylose = alpha-D-xylulofuranose. The protein is Xylose isomerase of Listeria welshimeri serovar 6b (strain ATCC 35897 / DSM 20650 / CCUG 15529 / CIP 8149 / NCTC 11857 / SLCC 5334 / V8).